The chain runs to 291 residues: Acetyl-coenzyme A carboxylase carboxyl transferase subunit beta (291 aa).

Residues 29–291 form the CoA carboxyltransferase N-terminal domain; it reads LWSKCPECGE…MHQQPAAVSA (263 aa). Residues Cys33, Cys36, Cys52, and Cys55 each contribute to the Zn(2+) site. Residues 33–55 form a C4-type zinc finger; the sequence is CPECGEVVYRKDLIANASVCASC.

Belongs to the AccD/PCCB family. Acetyl-CoA carboxylase is a heterohexamer composed of biotin carboxyl carrier protein (AccB), biotin carboxylase (AccC) and two subunits each of ACCase subunit alpha (AccA) and ACCase subunit beta (AccD). The cofactor is Zn(2+).

It is found in the cytoplasm. The enzyme catalyses N(6)-carboxybiotinyl-L-lysyl-[protein] + acetyl-CoA = N(6)-biotinyl-L-lysyl-[protein] + malonyl-CoA. Its pathway is lipid metabolism; malonyl-CoA biosynthesis; malonyl-CoA from acetyl-CoA: step 1/1. Component of the acetyl coenzyme A carboxylase (ACC) complex. Biotin carboxylase (BC) catalyzes the carboxylation of biotin on its carrier protein (BCCP) and then the CO(2) group is transferred by the transcarboxylase to acetyl-CoA to form malonyl-CoA. This is Acetyl-coenzyme A carboxylase carboxyl transferase subunit beta from Synechococcus sp. (strain RCC307).